Reading from the N-terminus, the 208-residue chain is uncharacterized protein (208 aa).

An N-terminal signal peptide occupies residues 1-34 (MPSHCRERLPFALHFFAVAYGASLWILGSHGLAA).

This is an uncharacterized protein from Sinorhizobium fredii (strain NBRC 101917 / NGR234).